Here is a 704-residue protein sequence, read N- to C-terminus: MASFGQVINPMTGENTWQERDENYDYHQEVANAGFGDMLHDWERNQKYDAALRKTIAAMREAGREVHVLDIGTGTGILAMMALRAGADTVTACEAFMPMANCAQRILNANGYGDRVRLIRKRSTDIEMGVDMPHRANLLVAELLDTELIGEGAIGIYNHAHNELLTADALCIPARATCYAQAAQSALATQWNSLKMLASLDGDILLKPPAQLLQCSGEAALHDVQLSQLPIDSFHVLTAPTPIFQFDFQRKQAREQQRENILRLQIVRPGSVELIFYWWQIELDDRGEQLLSCAPYWAHPELAQLQRSNSSKPLANVVPWRDHWMQAIYYIPKPLQLHTAGEQFYLRCYHDEYSLWFDAHQTEPPSQPARRHCCTCDLHMTYTRNRIGQLNQGTRNKRYLRYLEQAVHAKESAHLLVLGDGCLLGLASSALGAGSVRCLEPHRFSRRLLGAIAKHNQLKNVSFVESVQQLQPIELAAITHIFAEPYFLNSILPWDNFYFGTLLLQLLEQIPALSVQISPCAARIYALPVEFLDLHKIRTPIGSCEGFDLRLFDDMVQRSAEQAVALVEAQPLWEYPCRALAQPQQLLNVNFDNFGEDKHSHGCLQLTASGDCNGVALWVDWQLAADESPRSIVSSGPSETVVPGQLVKWDMFVRQGVHFISQPTKDRRQTDAGKRQLDWSINFKPRLGELNFNFSLRSSSEKSE.

2 SAM-dependent MTase PRMT-type domains span residues 14–356 (ENTW…YSLW) and 366–704 (SQPA…EKSE).

This sequence belongs to the class I-like SAM-binding methyltransferase superfamily. Protein arginine N-methyltransferase family. PRMT7 subfamily.

Its function is as follows. Essential arginine methyltransferase that can both catalyze the formation of omega-N monomethylarginine (MMA) and symmetrical dimethylarginine (sDMA). Specifically mediates the symmetrical dimethylation of arginine residues in the small nuclear ribonucleoproteins SmD1 and SmD3. The sequence is that of Protein arginine N-methyltransferase 7 (Art7) from Drosophila grimshawi (Hawaiian fruit fly).